A 145-amino-acid chain; its full sequence is Globin-1 (145 aa).

The region spanning 1 to 145 (GISADQAKAL…VIVPGMKAGY (145 aa)) is the Globin domain. Residues His63 and His92 each coordinate heme b.

This sequence belongs to the globin family. As to quaternary structure, monomer.

This is Globin-1 from Liolophura japonica (Chiton).